The following is a 783-amino-acid chain: Cilia- and flagella-associated protein 91 (783 aa).

Over residues 748 to 760 the composition is skewed to acidic residues; it reads EDFELEEEAESLD. Residues 748–783 are disordered; the sequence is EDFELEEEAESLDSEVPTVSVSKTSTIKPTQDEGEG. The segment covering 764 to 776 has biased composition (polar residues); the sequence is PTVSVSKTSTIKP.

This sequence belongs to the CFAP91 family. In terms of assembly, part of a complex containing MYCBP, AKAP1 and PRKAR2B. Interacts with MYCBP and AKAP1. Interacts with CFAP61. Post-translationally, phosphorylated by PKA. Expressed in the testis, in cells involved in spermatogenesis.

The protein resides in the cytoplasm. It localises to the mitochondrion. It is found in the cytoskeleton. Its subcellular location is the cilium axoneme. In terms of biological role, involved in sperm flagellum axonemal organization and function. May regulate cilium motility through its role in the assembly of the axonemal radial spokes. This Mus musculus (Mouse) protein is Cilia- and flagella-associated protein 91.